The sequence spans 157 residues: Small ribosomal subunit protein uS7 (157 aa).

The protein belongs to the universal ribosomal protein uS7 family. Part of the 30S ribosomal subunit. Contacts proteins S9 and S11.

Its function is as follows. One of the primary rRNA binding proteins, it binds directly to 16S rRNA where it nucleates assembly of the head domain of the 30S subunit. Is located at the subunit interface close to the decoding center, probably blocks exit of the E-site tRNA. This Borrelia duttonii (strain Ly) protein is Small ribosomal subunit protein uS7.